The following is a 410-amino-acid chain: Chorismate synthase (410 aa).

2 residues coordinate NADP(+): Arg-40 and Arg-46. FMN-binding positions include 129–131, 257–258, Gly-302, 317–321, and Arg-343; these read RSS, QA, and KPISS.

This sequence belongs to the chorismate synthase family. In terms of assembly, homotetramer. It depends on FMNH2 as a cofactor.

The enzyme catalyses 5-O-(1-carboxyvinyl)-3-phosphoshikimate = chorismate + phosphate. It participates in metabolic intermediate biosynthesis; chorismate biosynthesis; chorismate from D-erythrose 4-phosphate and phosphoenolpyruvate: step 7/7. Functionally, catalyzes the anti-1,4-elimination of the C-3 phosphate and the C-6 proR hydrogen from 5-enolpyruvylshikimate-3-phosphate (EPSP) to yield chorismate, which is the branch point compound that serves as the starting substrate for the three terminal pathways of aromatic amino acid biosynthesis. This reaction introduces a second double bond into the aromatic ring system. The chain is Chorismate synthase from Chlorobaculum parvum (strain DSM 263 / NCIMB 8327) (Chlorobium vibrioforme subsp. thiosulfatophilum).